Consider the following 74-residue polypeptide: Protein krueppel (74 aa).

C2H2-type zinc fingers lie at residues 1 to 4 (ERTH), 10 to 32 (FKCPECQKRFTRDHHLKTHMRLH), 38 to 60 (YHCSHCDRHFVQVANLRRHLRVH), and 66 to 74 (YTCEICKAK).

It belongs to the krueppel C2H2-type zinc-finger protein family.

It localises to the nucleus. Its function is as follows. Krueppel is a gap class segmentation protein. The chain is Protein krueppel (Kr) from Bradysia coprophila (Dark-winged fungus gnat).